Reading from the N-terminus, the 382-residue chain is UDP-4-amino-4-deoxy-L-arabinose--oxoglutarate aminotransferase (382 aa).

N6-(pyridoxal phosphate)lysine is present on lysine 182.

The protein belongs to the DegT/DnrJ/EryC1 family. ArnB subfamily. As to quaternary structure, homodimer. It depends on pyridoxal 5'-phosphate as a cofactor.

It carries out the reaction UDP-4-amino-4-deoxy-beta-L-arabinose + 2-oxoglutarate = UDP-beta-L-threo-pentopyranos-4-ulose + L-glutamate. It functions in the pathway nucleotide-sugar biosynthesis; UDP-4-deoxy-4-formamido-beta-L-arabinose biosynthesis; UDP-4-deoxy-4-formamido-beta-L-arabinose from UDP-alpha-D-glucuronate: step 2/3. It participates in bacterial outer membrane biogenesis; lipopolysaccharide biosynthesis. Its function is as follows. Catalyzes the conversion of UDP-4-keto-arabinose (UDP-Ara4O) to UDP-4-amino-4-deoxy-L-arabinose (UDP-L-Ara4N). The modified arabinose is attached to lipid A and is required for resistance to polymyxin and cationic antimicrobial peptides. The polypeptide is UDP-4-amino-4-deoxy-L-arabinose--oxoglutarate aminotransferase (Pectobacterium atrosepticum (strain SCRI 1043 / ATCC BAA-672) (Erwinia carotovora subsp. atroseptica)).